The sequence spans 262 residues: Small ribosomal subunit protein mS23 (262 aa).

Acidic residues predominate over residues Ala242–Ala254. The segment at Ala242–Ala262 is disordered.

Belongs to the mitochondrion-specific ribosomal protein mS23 family. Component of the mitochondrial small ribosomal subunit.

The protein resides in the mitochondrion. This Aspergillus niger (strain ATCC MYA-4892 / CBS 513.88 / FGSC A1513) protein is Small ribosomal subunit protein mS23 (rsm25).